Here is a 94-residue protein sequence, read N- to C-terminus: Probable Fe(2+)-trafficking protein (94 aa).

It belongs to the Fe(2+)-trafficking protein family.

Its function is as follows. Could be a mediator in iron transactions between iron acquisition and iron-requiring processes, such as synthesis and/or repair of Fe-S clusters in biosynthetic enzymes. The sequence is that of Probable Fe(2+)-trafficking protein from Marinomonas sp. (strain MWYL1).